The following is a 378-amino-acid chain: Squalene methyltransferase 1 (378 aa).

The chain crosses the membrane as a helical span at residues Leu17–Ile37.

The protein belongs to the class I-like SAM-binding methyltransferase superfamily. Erg6/SMT family.

The protein resides in the microsome membrane. The catalysed reaction is squalene + 2 S-adenosyl-L-methionine = 3,22-dimethyl-1,2,23,24-tetradehydro-2,3,22,23-tetrahydrosqualene + 2 S-adenosyl-L-homocysteine + 2 H(+). Functionally, converts squalene to mono- and dimethyl derivatives, but not to tri- and tetramethylated products. Unable to methylate cycloartenol, zymosterol or lanosterol. Methylates both C-3 and C22 positions, but only C-3 position in monomethylated products. Produces mainly dimethylated squalene. In Botryococcus braunii (Green alga), this protein is Squalene methyltransferase 1 (TMT-1).